The sequence spans 210 residues: Glutathione S-transferase P (210 aa).

The GST N-terminal domain occupies 2-81 (ASYTIVYFPV…HLGRTLGLYG (80 aa)). Position 4 is a phosphotyrosine; by EGFR (tyrosine 4). Glutathione contacts are provided by residues tyrosine 8, arginine 14, tryptophan 39, lysine 45, and 52–53 (QL). Residue threonine 62 is modified to Phosphothreonine. 65–66 (QS) is a glutathione binding site. In terms of domain architecture, GST C-terminal spans 83–204 (DQREAALVDM…ASPEHVNRPI (122 aa)). Residues lysine 103 and lysine 116 each carry the N6-succinyllysine modification. Lysine 128 is modified (N6-acetyllysine).

It belongs to the GST superfamily. Pi family. In terms of assembly, homodimer. Interacts with CDK5.

It localises to the cytoplasm. The protein localises to the mitochondrion. Its subcellular location is the nucleus. The catalysed reaction is RX + glutathione = an S-substituted glutathione + a halide anion + H(+). It carries out the reaction prostaglandin J2 + glutathione = prostaglandin J2-S-(R)-glutathione. The enzyme catalyses prostaglandin J2 + glutathione = prostaglandin J2-S-(S)-glutathione. It catalyses the reaction prostaglandin A2 + glutathione = prostaglandin A2-S-(S)-glutathione. The catalysed reaction is 11(S)-hydroxy-14(S),15(S)-epoxy-(5Z,8Z,12E)-eicosatrienoate + glutathione = (11S,15S)-dihydroxy-14(R)-S-glutathionyl-(5Z,8Z,12E)-eicosatrienoate. Conjugation of reduced glutathione to a wide number of exogenous and endogenous hydrophobic electrophiles. Involved in the formation of glutathione conjugates of both prostaglandin A2 (PGA2) and prostaglandin J2 (PGJ2). Participates in the formation of novel hepoxilin regioisomers. Negatively regulates CDK5 activity via p25/p35 translocation to prevent neurodegeneration. This Capra hircus (Goat) protein is Glutathione S-transferase P (GSTP1).